Reading from the N-terminus, the 144-residue chain is 6,7-dimethyl-8-ribityllumazine synthase (144 aa).

Residues Phe-21, 56 to 58 (AYE), and 80 to 82 (AVI) each bind 5-amino-6-(D-ribitylamino)uracil. 85–86 (GT) lines the (2S)-2-hydroxy-3-oxobutyl phosphate pocket. His-88 functions as the Proton donor in the catalytic mechanism. 5-amino-6-(D-ribitylamino)uracil is bound at residue Phe-113. Arg-127 serves as a coordination point for (2S)-2-hydroxy-3-oxobutyl phosphate.

This sequence belongs to the DMRL synthase family. As to quaternary structure, forms an icosahedral capsid composed of 60 subunits, arranged as a dodecamer of pentamers.

The catalysed reaction is (2S)-2-hydroxy-3-oxobutyl phosphate + 5-amino-6-(D-ribitylamino)uracil = 6,7-dimethyl-8-(1-D-ribityl)lumazine + phosphate + 2 H2O + H(+). Its pathway is cofactor biosynthesis; riboflavin biosynthesis; riboflavin from 2-hydroxy-3-oxobutyl phosphate and 5-amino-6-(D-ribitylamino)uracil: step 1/2. Catalyzes the formation of 6,7-dimethyl-8-ribityllumazine by condensation of 5-amino-6-(D-ribitylamino)uracil with 3,4-dihydroxy-2-butanone 4-phosphate. This is the penultimate step in the biosynthesis of riboflavin. This is 6,7-dimethyl-8-ribityllumazine synthase (ribH) from Photobacterium leiognathi.